The chain runs to 402 residues: Na(+)/H(+) antiporter NhaA 2 (402 aa).

A run of 11 helical transmembrane segments spans residues 18–38 (AGGIVLMFAAVLALIFANTAL), 63–83 (ALLWINDGLMAVFFFLVGLEV), 99–119 (SLPLIAAFGGIVLPALVFYGI), 129–149 (GWAIPAATDIAFALGILALLG), 158–178 (ALLLAIAVIDDIAAIAIIAIF), 182–202 (GVELAMLGAAAITLLILSAFG), 210–230 (IPYIVLGIVLWYFVLKSGVHA), 258–278 (ALHSWVAFLVVPIFALANAGV), 296–316 (IALGLIVGKQVGIFGFAWLAV), 329–349 (WLQVWGLSLVAGIGFTMSLFI), and 365–385 (IGVLSGSLIAALVGIAILVLG).

It belongs to the NhaA Na(+)/H(+) (TC 2.A.33) antiporter family.

The protein resides in the cell inner membrane. The catalysed reaction is Na(+)(in) + 2 H(+)(out) = Na(+)(out) + 2 H(+)(in). Na(+)/H(+) antiporter that extrudes sodium in exchange for external protons. The protein is Na(+)/H(+) antiporter NhaA 2 of Erythrobacter litoralis (strain HTCC2594).